We begin with the raw amino-acid sequence, 105 residues long: uncharacterized protein (105 aa).

The next 2 membrane-spanning stretches (helical) occupy residues 10-30 (YVVF…FKIG) and 48-68 (YPLA…YPPS).

The protein resides in the membrane. This is an uncharacterized protein from Acanthamoeba polyphaga mimivirus (APMV).